The sequence spans 440 residues: Protein eva-1 homolog C (440 aa).

Residues Met1–Pro13 are compositionally biased toward pro residues. The tract at residues Met1–Arg23 is disordered. A signal peptide spans Met1–Ala48. Residues Leu49 to Ala321 are Extracellular-facing. 3 N-linked (GlcNAc...) asparagine glycosylation sites follow: Asn62, Asn109, and Asn165. One can recognise an SUEL-type lectin 1 domain in the interval Ala67 to Gln159. The SUEL-type lectin 2 domain maps to Val168–Val260. A helical transmembrane segment spans residues Ala322 to Ile342. Over Arg343–Tyr440 the chain is Cytoplasmic. The tract at residues Ser364–Gln384 is disordered. Residues Ala367 to Ser381 are compositionally biased toward acidic residues.

This sequence belongs to the EVA1 family. In terms of tissue distribution, ubiquitous.

It is found in the cell membrane. Functionally, binds heparin. The protein is Protein eva-1 homolog C (Eva1c) of Mus musculus (Mouse).